Consider the following 375-residue polypeptide: Probable serine/threonine-protein kinase PBL28 (375 aa).

The residue at position 65 (Thr-65) is a Phosphothreonine. Residues 76–356 enclose the Protein kinase domain; the sequence is FSDENLLGKG…MDCVKELQLI (281 aa). ATP is bound by residues 82-90 and Lys-104; that span reads LGKGGFGRV. Tyr-152 is modified (phosphotyrosine). The active-site Proton acceptor is Asp-205. Phosphothreonine is present on Thr-245. Position 253 is a phosphotyrosine (Tyr-253).

It belongs to the protein kinase superfamily. Ser/Thr protein kinase family.

The protein localises to the cell membrane. It carries out the reaction L-seryl-[protein] + ATP = O-phospho-L-seryl-[protein] + ADP + H(+). The catalysed reaction is L-threonyl-[protein] + ATP = O-phospho-L-threonyl-[protein] + ADP + H(+). In terms of biological role, may be involved in plant defense signaling. The protein is Probable serine/threonine-protein kinase PBL28 of Arabidopsis thaliana (Mouse-ear cress).